A 59-amino-acid chain; its full sequence is MEEVIVTQDRSSIGIIPMHKKTLIALGLKKKGQSKKHKMTPQLKGMLRQVGYLLKVEKV.

It belongs to the universal ribosomal protein uL30 family. Part of the 50S ribosomal subunit.

This Leptospira biflexa serovar Patoc (strain Patoc 1 / ATCC 23582 / Paris) protein is Large ribosomal subunit protein uL30.